The following is a 976-amino-acid chain: Protein PLASTID MOVEMENT IMPAIRED 1-RELATED 2 (976 aa).

Residues 81-229 form the C2 NT-type domain; sequence IAHFGQRRFD…VLNLSFDYSV (149 aa). Over residues 309 to 319 the composition is skewed to basic and acidic residues; sequence KQAADSDDSGK. Disordered stretches follow at residues 309 to 343 and 381 to 419; these read KQAA…ESSR and NLLP…STEK. The span at 394–414 shows a compositional bias: low complexity; that stretch reads STFSSQVISESSESKSPSAMD.

In terms of biological role, seems not necessary for chloroplast and nuclear photorelocation movements. The protein is Protein PLASTID MOVEMENT IMPAIRED 1-RELATED 2 of Arabidopsis thaliana (Mouse-ear cress).